A 734-amino-acid polypeptide reads, in one-letter code: Photosystem I P700 chlorophyll a apoprotein A2 (734 aa).

Helical transmembrane passes span 46–69 (IFAS…FHVA), 135–158 (LYTG…LHLQ), 175–199 (LNHH…HVAI), 273–291 (IAHH…GHMY), 330–353 (LHFQ…QHMY), 369–395 (AALY…IFFV), 417–439 (AIIS…LYVH), and 517–535 (FLVH…LILV). [4Fe-4S] cluster contacts are provided by Cys559 and Cys568. Transmembrane regions (helical) follow at residues 575–596 (AFYL…YWHW) and 643–665 (LSVW…MFLI). Residues His654, Met662, and Tyr670 each contribute to the chlorophyll a site. Residue Trp671 participates in phylloquinone binding. Residues 707 to 727 (LVGLAHFSVGYVLTYAAFLIA) form a helical membrane-spanning segment.

This sequence belongs to the PsaA/PsaB family. In terms of assembly, the PsaA/B heterodimer binds the P700 chlorophyll special pair and subsequent electron acceptors. PSI consists of a core antenna complex that captures photons, and an electron transfer chain that converts photonic excitation into a charge separation. The eukaryotic PSI reaction center is composed of at least 11 subunits. P700 is a chlorophyll a/chlorophyll a' dimer, A0 is one or more chlorophyll a, A1 is one or both phylloquinones and FX is a shared 4Fe-4S iron-sulfur center. serves as cofactor.

The protein localises to the plastid. The protein resides in the chloroplast thylakoid membrane. The enzyme catalyses reduced [plastocyanin] + hnu + oxidized [2Fe-2S]-[ferredoxin] = oxidized [plastocyanin] + reduced [2Fe-2S]-[ferredoxin]. Its function is as follows. PsaA and PsaB bind P700, the primary electron donor of photosystem I (PSI), as well as the electron acceptors A0, A1 and FX. PSI is a plastocyanin-ferredoxin oxidoreductase, converting photonic excitation into a charge separation, which transfers an electron from the donor P700 chlorophyll pair to the spectroscopically characterized acceptors A0, A1, FX, FA and FB in turn. Oxidized P700 is reduced on the lumenal side of the thylakoid membrane by plastocyanin. This chain is Photosystem I P700 chlorophyll a apoprotein A2, found in Chlorokybus atmophyticus (Soil alga).